The primary structure comprises 54 residues: Rubredoxin (54 aa).

In terms of domain architecture, Rubredoxin-like spans 1-54 (MKKYVCVVCGYIYDPAEGDPDNGVNPGTSFEDIPDDWVCPLCGVGKDQFEPSEE). Fe cation contacts are provided by Cys-6, Cys-9, Cys-39, and Cys-42.

This sequence belongs to the rubredoxin family. It depends on Fe(3+) as a cofactor.

Rubredoxin is a small nonheme, iron protein lacking acid-labile sulfide. Its single Fe, chelated to 4 Cys, functions as an electron acceptor and may also stabilize the conformation of the molecule. Functions as an intermediate component in the electron transfer chain: NADH-&gt;NROR-&gt;Rd-&gt;FprA1/2 in which Rd serves as the proximal electron donor to the FDPs that exhibit H(2)O-forming NADH oxidase activity. Also functions as the proximal electron donor to the Dfx and revRbr proteins that display superoxide reductase (SOR) and NADH peroxidase activity, respectively. Therefore, is a key electron carrier in an efficient multienzyme complex that can scavenge O(2) and reactive oxygen species (ROS), and thus plays an important role in the oxidative stress defense system in C.acetobutylicum, an obligate anaerobic bacterium. In Clostridium acetobutylicum (strain ATCC 824 / DSM 792 / JCM 1419 / IAM 19013 / LMG 5710 / NBRC 13948 / NRRL B-527 / VKM B-1787 / 2291 / W), this protein is Rubredoxin (rd).